A 597-amino-acid polypeptide reads, in one-letter code: MPVRQLPETIVNRIAAGEVVERPASVVKELVENAIDAGASRIDIFSDGGGRRKIVIADDGSGMTRADLALAVDRHATSKLDDEDLLQIRTLGFRGEALPSIGAVARLTITTRHAGEPHAWTLGVEGGDKSPIAPAALSQGTRVEVADLFFATPARLKFLKTDRTEAEAIRDVVRRLAMARPDIAFTLAGEERAPVTWAAALPGAPGQLIRLGDILGADFRANAIEVRSEREGVAVEGFAASPALTRANALGQYLFVNGRPVRDKLILGAVRAAYSDYLPRDRHPVVALFVTLESREVDANVHPAKTEVRFRNAGLVRALIVHALKEGLAREGRRTAANSAGSVISTFRPASMPAANWDWRASPSYPVGGSAIDAPSFAERPQAAFDVGGPSADIRTHEVAPDLLDRPLGAARTQIHETYIVSQTRDGLIVVDQHAAHERIVYERLKASLAANGVQRQILLIPDIVEMDEATVERLVARADELAQFGLVVESFGPGAVAVRETPSLLGKTDAASLLRDLAEHMAEWDEALPLERRLMHVAATMACHGSVRAGRVLKPEEMNALLREMEATPNSGQCNHGRPTYVELTLTDIEKLFGRR.

Belongs to the DNA mismatch repair MutL/HexB family.

In terms of biological role, this protein is involved in the repair of mismatches in DNA. It is required for dam-dependent methyl-directed DNA mismatch repair. May act as a 'molecular matchmaker', a protein that promotes the formation of a stable complex between two or more DNA-binding proteins in an ATP-dependent manner without itself being part of a final effector complex. This Rhodopseudomonas palustris (strain HaA2) protein is DNA mismatch repair protein MutL.